The sequence spans 536 residues: Putative cysteine ligase BshC (536 aa).

Belongs to the BshC family.

Involved in bacillithiol (BSH) biosynthesis. May catalyze the last step of the pathway, the addition of cysteine to glucosamine malate (GlcN-Mal) to generate BSH. This is Putative cysteine ligase BshC from Anoxybacillus flavithermus (strain DSM 21510 / WK1).